The following is a 362-amino-acid chain: 3-dehydroquinate synthase (362 aa).

NAD(+) is bound by residues 72 to 77 (SGEEAK), 106 to 110 (GVTGD), 130 to 131 (TT), lysine 142, and lysine 151. Glutamate 184, histidine 246, and histidine 263 together coordinate Zn(2+).

This sequence belongs to the sugar phosphate cyclases superfamily. Dehydroquinate synthase family. Requires Co(2+) as cofactor. Zn(2+) serves as cofactor. It depends on NAD(+) as a cofactor.

It is found in the cytoplasm. It catalyses the reaction 7-phospho-2-dehydro-3-deoxy-D-arabino-heptonate = 3-dehydroquinate + phosphate. It participates in metabolic intermediate biosynthesis; chorismate biosynthesis; chorismate from D-erythrose 4-phosphate and phosphoenolpyruvate: step 2/7. Catalyzes the conversion of 3-deoxy-D-arabino-heptulosonate 7-phosphate (DAHP) to dehydroquinate (DHQ). The protein is 3-dehydroquinate synthase of Bacillus velezensis (strain DSM 23117 / BGSC 10A6 / LMG 26770 / FZB42) (Bacillus amyloliquefaciens subsp. plantarum).